The chain runs to 35 residues: Leukocyte cysteine proteinase inhibitor 2 (35 aa).

The disordered stretch occupies residues 1–35 (LAGGLTEPRPADTEIQEIANKVKPQLEEKTNKKYD). Basic and acidic residues predominate over residues 24-35 (PQLEEKTNKKYD).

Belongs to the cystatin family.

It localises to the cytoplasm. Potent inhibitor of cathepsins L and S, and papain. This chain is Leukocyte cysteine proteinase inhibitor 2, found in Sus scrofa (Pig).